Consider the following 1259-residue polypeptide: Neural cell adhesion molecule L1 (1259 aa).

The first 19 residues, 1–19, serve as a signal peptide directing secretion; it reads MVMMLWYVLPLLLCSPCLL. Topologically, residues 20–1122 are extracellular; sequence IQIPDEYKGH…VSTTGSFASE (1103 aa). Ig-like C2-type domains lie at 35–128, 138–225, 239–327, 332–419, 424–506, and 517–600; these read PVIT…HEIQ, PKET…EPID, PRLL…YYVT, PYWL…AYIY, PARI…NNVT, and TQIT…DEVE. Cystine bridges form between C57/C113 and C157/C208. N-linked (GlcNAc...) asparagine glycosylation is found at N100, N202, N246, and N293. 2 cysteine pairs are disulfide-bonded: C263–C311 and C353–C403. 3 N-linked (GlcNAc...) asparagine glycosylation sites follow: N432, N489, and N504. The cysteines at positions 447 and 496 are disulfide-linked. A disulfide bridge links C538 with C590. Short sequence motifs (cell attachment site) lie at residues 553–555 and 562–564; these read RGD. 5 consecutive Fibronectin type-III domains span residues 613–711, 716–809, 811–916, 919–1014, and 1016–1116; these read PVPH…TPEA, NPVD…SGED, PQVS…PEGV, HPEA…MALF, and KPDF…VSTT. N670 is a glycosylation site (N-linked (GlcNAc...) asparagine). The tract at residues 697 to 724 is disordered; that stretch reads GEPSPVSETVVTPEAAPEKNPVDVRGEG. Positions 712–724 are enriched in basic and acidic residues; the sequence is APEKNPVDVRGEG. N-linked (GlcNAc...) asparagine glycosylation is found at N725, N776, N824, N848, N875, N968, N978, N1021, N1029, N1072, and N1106. Residues 1123 to 1145 form a helical membrane-spanning segment; it reads GWFIAFVSAIILLLLILLILCFI. At 1146–1259 the chain is on the cytoplasmic side; that stretch reads KRSKGGKYSV…SPINPAVALE (114 aa). Residues S1165, R1179, S1180, S1183, S1196, S1245, S1246, and S1250 each carry the phosphoserine modification. Disordered regions lie at residues 1182 to 1209 and 1228 to 1259; these read ESDN…SDDS and IGQY…VALE. Positions 1243-1252 are enriched in polar residues; it reads NDSSGATSPI.

It belongs to the immunoglobulin superfamily. L1/neurofascin/NgCAM family. In terms of assembly, interacts with SHTN1; the interaction occurs in axonal growth cones. Interacts with isoform 2 of BSG. In terms of tissue distribution, isoform 2 is predominantly found in the brain, while isoform 1 is found in the peripheral nervous system.

The protein resides in the cell membrane. Its subcellular location is the cell projection. It localises to the growth cone. Its function is as follows. Neural cell adhesion molecule involved in the dynamics of cell adhesion and in the generation of transmembrane signals at tyrosine kinase receptors. During brain development, critical in multiple processes, including neuronal migration, axonal growth and fasciculation, and synaptogenesis. In the mature brain, plays a role in the dynamics of neuronal structure and function, including synaptic plasticity. The protein is Neural cell adhesion molecule L1 (L1cam) of Rattus norvegicus (Rat).